A 674-amino-acid polypeptide reads, in one-letter code: tRNA 5-methylaminomethyl-2-thiouridine biosynthesis bifunctional protein MnmC (674 aa).

A tRNA (mnm(5)s(2)U34)-methyltransferase region spans residues 1–237 (MLTSYQLESP…KREMTVGELN (237 aa)). Residues 270 to 674 (VGAGLAGANT…IRDLKRSQIL (405 aa)) form an FAD-dependent cmnm(5)s(2)U34 oxidoreductase region.

In the N-terminal section; belongs to the methyltransferase superfamily. tRNA (mnm(5)s(2)U34)-methyltransferase family. This sequence in the C-terminal section; belongs to the DAO family. FAD serves as cofactor.

Its subcellular location is the cytoplasm. It carries out the reaction 5-aminomethyl-2-thiouridine(34) in tRNA + S-adenosyl-L-methionine = 5-methylaminomethyl-2-thiouridine(34) in tRNA + S-adenosyl-L-homocysteine + H(+). Catalyzes the last two steps in the biosynthesis of 5-methylaminomethyl-2-thiouridine (mnm(5)s(2)U) at the wobble position (U34) in tRNA. Catalyzes the FAD-dependent demodification of cmnm(5)s(2)U34 to nm(5)s(2)U34, followed by the transfer of a methyl group from S-adenosyl-L-methionine to nm(5)s(2)U34, to form mnm(5)s(2)U34. This Marinomonas sp. (strain MWYL1) protein is tRNA 5-methylaminomethyl-2-thiouridine biosynthesis bifunctional protein MnmC.